Consider the following 378-residue polypeptide: O-methyltransferase dpfgI (378 aa).

S-adenosyl-L-methionine is bound by residues 232 to 233, D257, 279 to 280, and R295; these read GG and NF. Residue H299 is the Proton acceptor of the active site.

This sequence belongs to the class I-like SAM-binding methyltransferase superfamily. Cation-independent O-methyltransferase family.

It participates in secondary metabolite biosynthesis; terpenoid biosynthesis. O-methyltransferase; part of the gene cluster that mediates the biosynthesis of diterpenoid pyrones. The first step of the pathway is the synthesis of the alpha-pyrone moiety by the polyketide synthase dpfgA via condensation of one acetyl-CoA starter unit with 3 malonyl-CoA units and 2 methylations. The alpha-pyrone is then combined with geranylgeranyl pyrophosphate (GGPP) formed by the GGPP synthase dpfgD through the action of the prenyltransferase dpfgC to yield a linear alpha-pyrone diterpenoid. Subsequent steps in the diterpenoid pyrone biosynthetic pathway involve the decalin core formation, which is initiated by the epoxidation of the C10-C11 olefin by the FAD-dependent oxidoreductase dpfgE, and is followed by a cyclization cascade catalyzed by the terpene cyclase dpfgB. The short chain dehydrogenase/reductase dpfgG then oxidizes the 8S hydroxy group to a ketone and the short chain dehydrogenase/reductase dpfgH reduces the ketone to the 8R hydroxy group to yield higginsianin B. Higginsianin B is further methylated by the methyltransferase dpfgI to produce the intermediate named FDDP B. The cytochrome P450 monooxygenase dfgpJ then catalyzes a three-step oxidation at C-27 to generate a carboxylic acid as well as C-26 hydroxylation. Finally, methyltransferase dpfgK methylates the carboxylic acid generated by dpfgJ, yielding the final diterpenoid pyrones from the pathway which were named FDDP D and FDDP E. The polypeptide is O-methyltransferase dpfgI (Gibberella zeae (strain ATCC MYA-4620 / CBS 123657 / FGSC 9075 / NRRL 31084 / PH-1) (Wheat head blight fungus)).